Reading from the N-terminus, the 535-residue chain is Isoleucine N-monooxygenase 1 (535 aa).

The Cytoplasmic portion of the chain corresponds to Met1–Leu8. Residues Ser9–Phe29 traverse the membrane as a helical; Signal-anchor for type II membrane protein segment. Topologically, residues Lys30–Ile535 are lumenal. 3 N-linked (GlcNAc...) asparagine glycosylation sites follow: Asn38, Asn232, and Asn404. Heme is bound at residue Cys470.

It belongs to the cytochrome P450 family. Heme serves as cofactor. Exclusively expressed in aerial parts. Highest expression in the apical leaves. Also detected in the second leaf from the top and in the stem. Not expressed in older leaves or roots.

It is found in the microsome membrane. It catalyses the reaction L-isoleucine + 2 reduced [NADPH--hemoprotein reductase] + 2 O2 = (1E,2S)-2-methylbutanal oxime + 2 oxidized [NADPH--hemoprotein reductase] + CO2 + 3 H2O + 2 H(+). It carries out the reaction L-isoleucine + reduced [NADPH--hemoprotein reductase] + O2 = N-hydroxy-L-isoleucine + oxidized [NADPH--hemoprotein reductase] + H2O + 2 H(+). The enzyme catalyses N-hydroxy-L-isoleucine + reduced [NADPH--hemoprotein reductase] + O2 = N,N-dihydroxy-L-isoleucine + oxidized [NADPH--hemoprotein reductase] + H2O + H(+). The catalysed reaction is L-valine + 2 reduced [NADPH--hemoprotein reductase] + 2 O2 = (E)-2-methylpropanal oxime + 2 oxidized [NADPH--hemoprotein reductase] + CO2 + 3 H2O + 2 H(+). It catalyses the reaction L-valine + reduced [NADPH--hemoprotein reductase] + O2 = N-hydroxy-L-valine + oxidized [NADPH--hemoprotein reductase] + H2O + 2 H(+). It carries out the reaction N-hydroxy-L-valine + reduced [NADPH--hemoprotein reductase] + O2 = N,N-dihydroxy-L-valine + oxidized [NADPH--hemoprotein reductase] + H2O + H(+). The protein operates within secondary metabolite biosynthesis. Functionally, involved in the biosynthesis of the cyanogenic glucosides linamarin and lotaustralin and of the nitirle glucosides rhodiocyanoside A and D. Can use L-isoleucine &gt; L-valine as substrate, but not L-leucine, L-phenylalanine or L-tyrosine. Catalyzes multi-step reactions starting with two successive N-hydroxylations using L-isoleucine and, to a lower extent, L-valine as substrates leading to the formation of N,N-dihydroxy-L-valine and N,N-dihydroxy-L-isoleucine, respectively; following spontaneous reactions lead to the production of (E)-2-methylpropanal oxime and (1E,2S)-2-methylbutanal oxime, respectively. This chain is Isoleucine N-monooxygenase 1, found in Lotus japonicus (Lotus corniculatus var. japonicus).